Reading from the N-terminus, the 227-residue chain is NADH-quinone oxidoreductase subunit C (227 aa).

Belongs to the complex I 30 kDa subunit family. NDH-1 is composed of 14 different subunits. Subunits NuoB, C, D, E, F, and G constitute the peripheral sector of the complex.

Its subcellular location is the cell inner membrane. It carries out the reaction a quinone + NADH + 5 H(+)(in) = a quinol + NAD(+) + 4 H(+)(out). Its function is as follows. NDH-1 shuttles electrons from NADH, via FMN and iron-sulfur (Fe-S) centers, to quinones in the respiratory chain. The immediate electron acceptor for the enzyme in this species is believed to be ubiquinone. Couples the redox reaction to proton translocation (for every two electrons transferred, four hydrogen ions are translocated across the cytoplasmic membrane), and thus conserves the redox energy in a proton gradient. This chain is NADH-quinone oxidoreductase subunit C, found in Legionella pneumophila (strain Paris).